The following is a 49-amino-acid chain: Light-harvesting protein B-875 beta chain (49 aa).

The Cytoplasmic portion of the chain corresponds to 2–27 (ADKSDLGYTGLTDEQAQELHSVYMSG). H21 and H39 together coordinate a bacteriochlorophyll. Residues 28–45 (LWPFSAVAIVAHLAVYIW) traverse the membrane as a helical; Signal-anchor for type II membrane protein segment. At 46 to 49 (RPWF) the chain is on the periplasmic side.

It belongs to the antenna complex beta subunit family. As to quaternary structure, the core complex is formed by different alpha and beta chains, binding bacteriochlorophyll molecules, and arranged most probably in tetrameric structures disposed around the reaction center. The non-pigmented gamma chains may constitute additional components.

The protein resides in the cell inner membrane. Antenna complexes are light-harvesting systems, which transfer the excitation energy to the reaction centers. This is Light-harvesting protein B-875 beta chain (pufB) from Cereibacter sphaeroides (Rhodobacter sphaeroides).